A 74-amino-acid chain; its full sequence is uncharacterized protein (74 aa).

Disordered stretches follow at residues 1–26 (MNGPRYAHSNYGGNKGGPSNSTSGVF) and 46–74 (ITNSPNSNSRGSSSSSSTSKSSSKTSFTQ). The chain crosses the membrane as a helical span at residues 34-50 (VSNKSIMLISLKITNSP). Over residues 47 to 74 (TNSPNSNSRGSSSSSSTSKSSSKTSFTQ) the composition is skewed to low complexity.

The protein resides in the membrane. This is an uncharacterized protein from Dictyostelium discoideum (Social amoeba).